Here is a 316-residue protein sequence, read N- to C-terminus: tRNA(Ile)-lysidine synthase (316 aa).

ATP is bound at residue 33-38 (SGGTDS).

The protein belongs to the tRNA(Ile)-lysidine synthase family.

The protein localises to the cytoplasm. It carries out the reaction cytidine(34) in tRNA(Ile2) + L-lysine + ATP = lysidine(34) in tRNA(Ile2) + AMP + diphosphate + H(+). Ligates lysine onto the cytidine present at position 34 of the AUA codon-specific tRNA(Ile) that contains the anticodon CAU, in an ATP-dependent manner. Cytidine is converted to lysidine, thus changing the amino acid specificity of the tRNA from methionine to isoleucine. This chain is tRNA(Ile)-lysidine synthase, found in Bdellovibrio bacteriovorus (strain ATCC 15356 / DSM 50701 / NCIMB 9529 / HD100).